The chain runs to 626 residues: Probable potassium transport system protein Kup (626 aa).

Helical transmembrane passes span 11-31 (FLTL…TSPL), 55-75 (LSLI…VFVM), 103-123 (AWII…GMIT), 140-160 (AALS…LFLI), 171-191 (LFGP…FVSL), 216-236 (LGFA…ALYA), 250-270 (WFAV…ALLI), 282-302 (LLVP…ATVI), 340-360 (IYAP…VLAF), 369-389 (AYGL…LVVA), 395-415 (WPGL…LSFL), and 422-442 (LGDG…VMST).

This sequence belongs to the HAK/KUP transporter (TC 2.A.72) family.

Its subcellular location is the cell inner membrane. The catalysed reaction is K(+)(in) + H(+)(in) = K(+)(out) + H(+)(out). In terms of biological role, transport of potassium into the cell. Likely operates as a K(+):H(+) symporter. The chain is Probable potassium transport system protein Kup from Methylococcus capsulatus (strain ATCC 33009 / NCIMB 11132 / Bath).